Reading from the N-terminus, the 334-residue chain is D-fructose 1,6-bisphosphatase class 2/sedoheptulose 1,7-bisphosphatase (334 aa).

Positions 33, 57, 85, and 88 each coordinate Mn(2+). Residues 88-90, Tyr-119, 164-166, and 186-188 contribute to the substrate site; these read EGT, RAR, and DGD. A Mn(2+)-binding site is contributed by Glu-213.

It belongs to the FBPase class 2 family. In terms of assembly, homotetramer. Requires Mn(2+) as cofactor.

The catalysed reaction is beta-D-fructose 1,6-bisphosphate + H2O = beta-D-fructose 6-phosphate + phosphate. It carries out the reaction D-sedoheptulose 1,7-bisphosphate + H2O = D-sedoheptulose 7-phosphate + phosphate. It functions in the pathway carbohydrate biosynthesis; Calvin cycle. In terms of biological role, catalyzes the hydrolysis of fructose 1,6-bisphosphate (Fru 1,6-P2) and sedoheptulose 1,7-bisphosphate (Sed 1,7-P2) to fructose 6-phosphate and sedoheptulose 7-phosphate, respectively. This chain is D-fructose 1,6-bisphosphatase class 2/sedoheptulose 1,7-bisphosphatase, found in Prochlorococcus marinus (strain MIT 9313).